Here is a 282-residue protein sequence, read N- to C-terminus: Elongation factor Ts (282 aa).

Positions 80 to 83 are involved in Mg(2+) ion dislocation from EF-Tu; sequence TDFV.

This sequence belongs to the EF-Ts family.

The protein resides in the cytoplasm. Associates with the EF-Tu.GDP complex and induces the exchange of GDP to GTP. It remains bound to the aminoacyl-tRNA.EF-Tu.GTP complex up to the GTP hydrolysis stage on the ribosome. This Chlamydia caviae (strain ATCC VR-813 / DSM 19441 / 03DC25 / GPIC) (Chlamydophila caviae) protein is Elongation factor Ts.